A 516-amino-acid polypeptide reads, in one-letter code: Arginyl-tRNA--protein transferase 1 (516 aa).

Over residues 150-180 (IESEEKEKEKSIKKEGSKEFIHPQSIEEKLG) the composition is skewed to basic and acidic residues. The segment at 150–206 (IESEEKEKEKSIKKEGSKEFIHPQSIEEKLGSGEPSHPIKVHIGPKPGKGADLSKPP) is disordered.

This sequence belongs to the R-transferase family. As to quaternary structure, monomer. Interacts with LIAT1; LIAT1 is not a substrate of ATE1, the interaction takes place in the cytoplasm and seems to increase ATE1 arginyltransferase activity. In terms of assembly, interacts with LIAT1; has a higher affinity than the other isoforms. In terms of tissue distribution, widely expressed.

It localises to the nucleus. Its subcellular location is the cytoplasm. It carries out the reaction an N-terminal L-alpha-aminoacyl-[protein] + L-arginyl-tRNA(Arg) = an N-terminal L-arginyl-L-aminoacyl-[protein] + tRNA(Arg) + H(+). Involved in the post-translational conjugation of arginine to the N-terminal aspartate or glutamate of a protein. This arginylation is required for degradation of the protein via the ubiquitin pathway. Does not arginylate cysteine residues. The chain is Arginyl-tRNA--protein transferase 1 from Mus musculus (Mouse).